Here is a 611-residue protein sequence, read N- to C-terminus: Phosphomethylpyrimidine synthase (611 aa).

Substrate is bound by residues Asn212, Met241, Tyr270, His306, 326–328 (SRG), 367–370 (DGLR), and Glu406. Position 410 (His410) interacts with Zn(2+). Tyr433 serves as a coordination point for substrate. His474 provides a ligand contact to Zn(2+). 3 residues coordinate [4Fe-4S] cluster: Cys554, Cys557, and Cys562.

This sequence belongs to the ThiC family. Homodimer. The cofactor is [4Fe-4S] cluster.

It catalyses the reaction 5-amino-1-(5-phospho-beta-D-ribosyl)imidazole + S-adenosyl-L-methionine = 4-amino-2-methyl-5-(phosphooxymethyl)pyrimidine + CO + 5'-deoxyadenosine + formate + L-methionine + 3 H(+). The protein operates within cofactor biosynthesis; thiamine diphosphate biosynthesis. Its function is as follows. Catalyzes the synthesis of the hydroxymethylpyrimidine phosphate (HMP-P) moiety of thiamine from aminoimidazole ribotide (AIR) in a radical S-adenosyl-L-methionine (SAM)-dependent reaction. This chain is Phosphomethylpyrimidine synthase, found in Bartonella bacilliformis (strain ATCC 35685 / KC583 / Herrer 020/F12,63).